The following is a 432-amino-acid chain: Cysteine desulfurase, mitosomal (432 aa).

Pyridoxal 5'-phosphate is bound by residues 102–103, Gln212, and 232–234; these read AT and CAH. The residue at position 235 (Lys235) is an N6-(pyridoxal phosphate)lysine. Residue Thr272 participates in pyridoxal 5'-phosphate binding. Cys357 serves as the catalytic Cysteine persulfide intermediate. Cys357 contacts [2Fe-2S] cluster.

It belongs to the class-V pyridoxal-phosphate-dependent aminotransferase family. NifS/IscS subfamily. Pyridoxal 5'-phosphate serves as cofactor.

The protein resides in the mitosome. It carries out the reaction (sulfur carrier)-H + L-cysteine = (sulfur carrier)-SH + L-alanine. Catalyzes the removal of elemental sulfur from cysteine to produce alanine. It supplies the inorganic sulfur for iron-sulfur (Fe-S) clusters in mitosomes. In Encephalitozoon cuniculi (strain GB-M1) (Microsporidian parasite), this protein is Cysteine desulfurase, mitosomal.